A 339-amino-acid polypeptide reads, in one-letter code: N-acetyl-gamma-glutamyl-phosphate reductase 1 (339 aa).

The active site involves C149.

This sequence belongs to the NAGSA dehydrogenase family. Type 1 subfamily.

It localises to the cytoplasm. It carries out the reaction N-acetyl-L-glutamate 5-semialdehyde + phosphate + NADP(+) = N-acetyl-L-glutamyl 5-phosphate + NADPH + H(+). The protein operates within amino-acid biosynthesis; L-arginine biosynthesis; N(2)-acetyl-L-ornithine from L-glutamate: step 3/4. Its function is as follows. Catalyzes the NADPH-dependent reduction of N-acetyl-5-glutamyl phosphate to yield N-acetyl-L-glutamate 5-semialdehyde. The sequence is that of N-acetyl-gamma-glutamyl-phosphate reductase 1 from Lactiplantibacillus plantarum (strain ATCC BAA-793 / NCIMB 8826 / WCFS1) (Lactobacillus plantarum).